Reading from the N-terminus, the 236-residue chain is Small ribosomal subunit protein uS2c (236 aa).

It belongs to the universal ribosomal protein uS2 family.

It localises to the plastid. It is found in the chloroplast. This Eucalyptus globulus subsp. globulus (Tasmanian blue gum) protein is Small ribosomal subunit protein uS2c (rps2).